We begin with the raw amino-acid sequence, 287 residues long: Cysteine-rich repeat secretory protein 59 (287 aa).

Positions 1–26 are cleaved as a signal peptide; that stretch reads METTKKLSPIFCFSSLLCLFFTMNQA. Gnk2-homologous domains follow at residues 32–134 and 140–250; these read HMDT…DKFF and KKPN…ITTS. Asn43, Asn47, Asn63, Asn72, Asn93, Asn103, Asn111, and Asn212 each carry an N-linked (GlcNAc...) asparagine glycan.

It belongs to the cysteine-rich repeat secretory protein family.

The protein resides in the secreted. In Arabidopsis thaliana (Mouse-ear cress), this protein is Cysteine-rich repeat secretory protein 59 (CRRSP59).